The primary structure comprises 293 residues: Probable xyloglucan endotransglucosylase/hydrolase protein B (293 aa).

The first 21 residues, 1-21 (MASSLLILCLVLVSLASSALC), serve as a signal peptide directing secretion. The GH16 domain occupies 23 to 220 (APRRPVDVPF…WSKAPFVAEY (198 aa)). The active-site Nucleophile is E106. E110 functions as the Proton donor in the catalytic mechanism. E110 is a xyloglucan binding site. N114 is a glycosylation site (N-linked (GlcNAc...) asparagine). Xyloglucan is bound by residues 123–125 (QTN), 133–135 (DRE), 199–200 (DW), and G204. 2 disulfide bridges follow: C228/C237 and C274/C287. Position 279 (R279) interacts with xyloglucan.

This sequence belongs to the glycosyl hydrolase 16 family. XTH group 1 subfamily. Contains at least one intrachain disulfide bond essential for its enzymatic activity. In terms of tissue distribution, predominantly expressed in the phloem fibers of growing internodes. Weakly or not expressed in the xylem. In the internode, it is expressed closer to the bottom of the internode compared to XTHA.

It localises to the secreted. The protein localises to the cell wall. It is found in the extracellular space. The protein resides in the apoplast. The enzyme catalyses breaks a beta-(1-&gt;4) bond in the backbone of a xyloglucan and transfers the xyloglucanyl segment on to O-4 of the non-reducing terminal glucose residue of an acceptor, which can be a xyloglucan or an oligosaccharide of xyloglucan.. Catalyzes xyloglucan endohydrolysis (XEH) and/or endotransglycosylation (XET). Cleaves and religates xyloglucan polymers, an essential constituent of the primary cell wall, and thereby participates in cell wall construction of growing tissues. The chain is Probable xyloglucan endotransglucosylase/hydrolase protein B (XTHB) from Phaseolus angularis (Azuki bean).